A 140-amino-acid polypeptide reads, in one-letter code: General stress protein 26 (140 aa).

This is General stress protein 26 (ydaG) from Bacillus subtilis (strain 168).